We begin with the raw amino-acid sequence, 100 residues long: Urease subunit gamma (100 aa).

It belongs to the urease gamma subunit family. As to quaternary structure, heterotrimer of UreA (gamma), UreB (beta) and UreC (alpha) subunits. Three heterotrimers associate to form the active enzyme.

It is found in the cytoplasm. The enzyme catalyses urea + 2 H2O + H(+) = hydrogencarbonate + 2 NH4(+). The protein operates within nitrogen metabolism; urea degradation; CO(2) and NH(3) from urea (urease route): step 1/1. The sequence is that of Urease subunit gamma from Pseudoalteromonas translucida (strain TAC 125).